We begin with the raw amino-acid sequence, 427 residues long: Glutamate-1-semialdehyde 2,1-aminomutase (427 aa).

Position 264 is an N6-(pyridoxal phosphate)lysine (Lys264).

Belongs to the class-III pyridoxal-phosphate-dependent aminotransferase family. HemL subfamily. Homodimer. Pyridoxal 5'-phosphate serves as cofactor.

Its subcellular location is the cytoplasm. The enzyme catalyses (S)-4-amino-5-oxopentanoate = 5-aminolevulinate. It participates in porphyrin-containing compound metabolism; protoporphyrin-IX biosynthesis; 5-aminolevulinate from L-glutamyl-tRNA(Glu): step 2/2. This chain is Glutamate-1-semialdehyde 2,1-aminomutase, found in Clostridium botulinum (strain Eklund 17B / Type B).